The chain runs to 399 residues: Rho GTPase-activating protein gacC (399 aa).

A compositionally biased stretch (basic and acidic residues) spans 1–13 (MESKDQNVYRKGS). Positions 1-80 (MESKDQNVYR…SSSTSTTPVK (80 aa)) are disordered. A compositionally biased stretch (polar residues) spans 14–31 (DNFSKGSNTFFGNLKSIS). The span at 61–79 (SVDSSSSNPSSSSTSTTPV) shows a compositional bias: low complexity. The Rho-GAP domain occupies 186–375 (VELEESFKTA…NLISFFQQIF (190 aa)).

Its subcellular location is the cytoplasm. Rho GTPase-activating protein involved in the signal transduction pathway. This chain is Rho GTPase-activating protein gacC (gacC), found in Dictyostelium discoideum (Social amoeba).